A 118-amino-acid chain; its full sequence is Acidic phospholipase A2 PA-3 (118 aa).

Cystine bridges form between C11/C71, C27/C117, C29/C45, C44/C98, C51/C91, C60/C84, and C78/C89. Residues Y28, G30, and G32 each contribute to the Ca(2+) site. Residue H48 is part of the active site. D49 is a Ca(2+) binding site. The active site involves D92.

The protein belongs to the phospholipase A2 family. Group I subfamily. D49 sub-subfamily. Requires Ca(2+) as cofactor. Expressed by the venom gland.

Its subcellular location is the secreted. The catalysed reaction is a 1,2-diacyl-sn-glycero-3-phosphocholine + H2O = a 1-acyl-sn-glycero-3-phosphocholine + a fatty acid + H(+). PLA2 catalyzes the calcium-dependent hydrolysis of the 2-acyl groups in 3-sn-phosphoglycerides. This Pseudechis australis (Mulga snake) protein is Acidic phospholipase A2 PA-3.